We begin with the raw amino-acid sequence, 235 residues long: MSRYLKHFTAVGDNKSAVPTWHEEDTSHHVTTLHDAPDGLEVSTGQHLGQLSFRDSLRKLYSTERFQIVVVCLVVLDAIFVLCELLIDLSIIEADHHRIAPQVFHYLSLALLTFFMVELAGKIFAYRLEFLHHKFEVFDGIVVVVSFILDIIYISKEDAFDAMGLLILLRLWRVARIINGILVSVQNRANHRVEKLKEINESLVHQVNELKEQNTKMDQENVRLRALLKDHSIDF.

At 1–65 (MSRYLKHFTA…SLRKLYSTER (65 aa)) the chain is on the cytoplasmic side. Residues 66 to 86 (FQIVVVCLVVLDAIFVLCELL) form a helical membrane-spanning segment. Residues 87-103 (IDLSIIEADHHRIAPQV) lie on the Extracellular side of the membrane. Residues 104–126 (FHYLSLALLTFFMVELAGKIFAY) form a helical membrane-spanning segment. The Cytoplasmic segment spans residues 127-134 (RLEFLHHK). Residues 135–155 (FEVFDGIVVVVSFILDIIYIS) traverse the membrane as a helical segment. The Extracellular portion of the chain corresponds to 156–162 (KEDAFDA). A helical transmembrane segment spans residues 163-183 (MGLLILLRLWRVARIINGILV). Residues 184 to 235 (SVQNRANHRVEKLKEINESLVHQVNELKEQNTKMDQENVRLRALLKDHSIDF) are Cytoplasmic-facing. Residues 187–231 (NRANHRVEKLKEINESLVHQVNELKEQNTKMDQENVRLRALLKDH) are a coiled coil.

This sequence belongs to the hydrogen channel family. As to quaternary structure, homodimer.

It localises to the membrane. The protein resides in the cell membrane. Functionally, mediates the voltage-dependent proton permeability of excitable membranes. Forms a proton-selective channel through which protons may pass in accordance with their electrochemical gradient. In Danio rerio (Zebrafish), this protein is Voltage-gated hydrogen channel 1 (hvcn1).